Reading from the N-terminus, the 65-residue chain is Photosystem II reaction center protein J (65 aa).

Over residues 1–17 (MSTKLKGPDGRIPDRLP) the composition is skewed to basic and acidic residues. Residues 1-21 (MSTKLKGPDGRIPDRLPDGSP) are disordered. The chain crosses the membrane as a helical span at residues 36-56 (LWLVATVGGMAVLSVLGLFFF).

Belongs to the PsbJ family. PSII is composed of 1 copy each of membrane proteins PsbA, PsbB, PsbC, PsbD, PsbE, PsbF, PsbH, PsbI, PsbJ, PsbK, PsbL, PsbM, PsbT, PsbX, PsbY, Psb30/Ycf12, peripheral proteins PsbO, CyanoQ (PsbQ), PsbU, PsbV and a large number of cofactors. It forms dimeric complexes.

It localises to the cellular thylakoid membrane. Functionally, one of the components of the core complex of photosystem II (PSII). PSII is a light-driven water:plastoquinone oxidoreductase that uses light energy to abstract electrons from H(2)O, generating O(2) and a proton gradient subsequently used for ATP formation. It consists of a core antenna complex that captures photons, and an electron transfer chain that converts photonic excitation into a charge separation. In Prochlorococcus marinus (strain MIT 9313), this protein is Photosystem II reaction center protein J.